We begin with the raw amino-acid sequence, 224 residues long: Large ribosomal subunit protein uL3 (224 aa).

N5-methylglutamine is present on Q158.

It belongs to the universal ribosomal protein uL3 family. As to quaternary structure, part of the 50S ribosomal subunit. Forms a cluster with proteins L14 and L19. Methylated by PrmB.

In terms of biological role, one of the primary rRNA binding proteins, it binds directly near the 3'-end of the 23S rRNA, where it nucleates assembly of the 50S subunit. In Acidovorax sp. (strain JS42), this protein is Large ribosomal subunit protein uL3.